The chain runs to 289 residues: Acetylglutamate kinase (289 aa).

Substrate contacts are provided by residues glycine 60 to glycine 61, arginine 82, and asparagine 186.

Belongs to the acetylglutamate kinase family. ArgB subfamily.

It is found in the cytoplasm. The catalysed reaction is N-acetyl-L-glutamate + ATP = N-acetyl-L-glutamyl 5-phosphate + ADP. Its pathway is amino-acid biosynthesis; L-arginine biosynthesis; N(2)-acetyl-L-ornithine from L-glutamate: step 2/4. Catalyzes the ATP-dependent phosphorylation of N-acetyl-L-glutamate. The protein is Acetylglutamate kinase of Methanoculleus marisnigri (strain ATCC 35101 / DSM 1498 / JR1).